Reading from the N-terminus, the 345-residue chain is MTNKTSLSYKDAGVDIDAGNALVDRIKGVVKKTRRPEVMGGLGGFGALCALPQKYREPVLVSGTDGVGTKLRLAMDLKRHDTIGIDLVAMCVNDLVVQGAEPLFFLDYYATGKLDVDTAASVITGIAEGCLQSGCSLVGGETAEMPGMYHGEDYDVAGFCVGVVEKSEIIDGSKVTDGDVLIALGSSGPHSNGYSLVRKILEVSKTDPETTELEGKPLADHLLAPTRIYVKNILELIENVDVHAIAHLTGGGFWENIPRVLPDNTQAVIDESSWQWPAVFNWLQTAGNVSQHEMYRTFNCGVGMLIALPASEADKAIALMTAKGENAWKIGIIKASDSDERVVIE.

This sequence belongs to the AIR synthase family.

The protein localises to the cytoplasm. It carries out the reaction 2-formamido-N(1)-(5-O-phospho-beta-D-ribosyl)acetamidine + ATP = 5-amino-1-(5-phospho-beta-D-ribosyl)imidazole + ADP + phosphate + H(+). It functions in the pathway purine metabolism; IMP biosynthesis via de novo pathway; 5-amino-1-(5-phospho-D-ribosyl)imidazole from N(2)-formyl-N(1)-(5-phospho-D-ribosyl)glycinamide: step 2/2. This Enterobacter sp. (strain 638) protein is Phosphoribosylformylglycinamidine cyclo-ligase.